We begin with the raw amino-acid sequence, 233 residues long: Ribonuclease 3 (233 aa).

The 123-residue stretch at 4–126 (LNKLMERLGH…IVGAIYIDAG (123 aa)) folds into the RNase III domain. Mg(2+) is bound at residue E39. D43 is a catalytic residue. Residues D112 and E115 each coordinate Mg(2+). Residue E115 is part of the active site. Residues 153-222 (DAKSLLQEWL…AKRFLELLDD (70 aa)) form the DRBM domain.

It belongs to the ribonuclease III family. As to quaternary structure, homodimer. Requires Mg(2+) as cofactor.

It is found in the cytoplasm. The enzyme catalyses Endonucleolytic cleavage to 5'-phosphomonoester.. Digests double-stranded RNA. Involved in the processing of primary rRNA transcript to yield the immediate precursors to the large and small rRNAs (23S and 16S). Processes some mRNAs, and tRNAs when they are encoded in the rRNA operon. Processes pre-crRNA and tracrRNA of type II CRISPR loci if present in the organism. This is Ribonuclease 3 from Coxiella burnetii (strain RSA 331 / Henzerling II).